The sequence spans 561 residues: Bifunctional NAD(P)H-hydrate repair enzyme (561 aa).

The interval 1–241 is NAD(P)H-hydrate epimerase; sequence MLSRISERCT…WMIAAERMDA (241 aa). The 207-residue stretch at 29-235 folds into the YjeF N-terminal domain; the sequence is LRDAEPAAAA…SLGLEEWMIA (207 aa). Positions 77–81 are NADPHX 1; for epimerase activity; the sequence is NNGGD. K(+) contacts are provided by Asn-78 and Asp-145. An NADPHX 1; for epimerase activity region spans residues 149 to 155; it reads GTGISGP. Positions 160 and 178 each coordinate (6S)-NADPHX. Ser-181 serves as a coordination point for K(+). The 300-residue stretch at 249-548 folds into the YjeF C-terminal domain; the sequence is LGDVYGYFST…PRIPFIVNAS (300 aa). Positions 249–561 are ADP-dependent (S)-NAD(P)H-hydrate dehydratase; the sequence is LGDVYGYFST…SATQQRPSGL (313 aa). Residue Gly-351 coordinates (6S)-NADPHX. The interval 417–423 is NADPHX 2; for dehydratase activity; the sequence is HPGEAAR. Residues 454–458 and 475–484 contribute to the ADP site; these read KGPGT and NAGMASGGMG. Residue Asp-485 coordinates (6S)-NADPHX.

It in the N-terminal section; belongs to the NnrE/AIBP family. In the C-terminal section; belongs to the NnrD/CARKD family. Requires K(+) as cofactor.

The enzyme catalyses (6S)-NADHX + ADP = AMP + phosphate + NADH + H(+). It catalyses the reaction (6S)-NADPHX + ADP = AMP + phosphate + NADPH + H(+). It carries out the reaction (6R)-NADHX = (6S)-NADHX. The catalysed reaction is (6R)-NADPHX = (6S)-NADPHX. Its function is as follows. Bifunctional enzyme that catalyzes the epimerization of the S- and R-forms of NAD(P)HX and the dehydration of the S-form of NAD(P)HX at the expense of ADP, which is converted to AMP. This allows the repair of both epimers of NAD(P)HX, a damaged form of NAD(P)H that is a result of enzymatic or heat-dependent hydration. The protein is Bifunctional NAD(P)H-hydrate repair enzyme of Leishmania braziliensis.